Consider the following 314-residue polypeptide: Acetyl-coenzyme A carboxylase carboxyl transferase subunit beta (314 aa).

One can recognise a CoA carboxyltransferase N-terminal domain in the interval 25–294 (VWTKCDSCSQ…PGTKPIVAEF (270 aa)). Residues Cys-29, Cys-32, Cys-48, and Cys-51 each contribute to the Zn(2+) site. The segment at 29 to 51 (CDSCSQVLYRAELERNLEVCPKC) adopts a C4-type zinc-finger fold.

This sequence belongs to the AccD/PCCB family. Acetyl-CoA carboxylase is a heterohexamer composed of biotin carboxyl carrier protein (AccB), biotin carboxylase (AccC) and two subunits each of ACCase subunit alpha (AccA) and ACCase subunit beta (AccD). Zn(2+) serves as cofactor.

The protein resides in the cytoplasm. It catalyses the reaction N(6)-carboxybiotinyl-L-lysyl-[protein] + acetyl-CoA = N(6)-biotinyl-L-lysyl-[protein] + malonyl-CoA. It functions in the pathway lipid metabolism; malonyl-CoA biosynthesis; malonyl-CoA from acetyl-CoA: step 1/1. Component of the acetyl coenzyme A carboxylase (ACC) complex. Biotin carboxylase (BC) catalyzes the carboxylation of biotin on its carrier protein (BCCP) and then the CO(2) group is transferred by the transcarboxylase to acetyl-CoA to form malonyl-CoA. The chain is Acetyl-coenzyme A carboxylase carboxyl transferase subunit beta from Photorhabdus laumondii subsp. laumondii (strain DSM 15139 / CIP 105565 / TT01) (Photorhabdus luminescens subsp. laumondii).